The chain runs to 289 residues: Orotidine 5'-phosphate decarboxylase (289 aa).

The Proton donor role is filled by K97.

Belongs to the OMP decarboxylase family. Type 2 subfamily.

The catalysed reaction is orotidine 5'-phosphate + H(+) = UMP + CO2. It participates in pyrimidine metabolism; UMP biosynthesis via de novo pathway; UMP from orotate: step 2/2. This Petrotoga mobilis (strain DSM 10674 / SJ95) protein is Orotidine 5'-phosphate decarboxylase.